Here is a 1138-residue protein sequence, read N- to C-terminus: Mastermind-like protein 3 (1138 aa).

The span at 37-48 (PNSTPAAPSSNH) shows a compositional bias: polar residues. 6 disordered regions span residues 37-68 (PNST…AAVP), 119-148 (EQRA…ASAE), 169-188 (RSPL…FSPT), 207-237 (PSNM…THTP), 334-480 (EEKK…QRAK), and 503-547 (QQQQ…PQAF). The span at 52 to 64 (GGCGGSGGPGGGS) shows a compositional bias: gly residues. Composition is skewed to polar residues over residues 130–139 (GKQQHPSKPQ) and 173–188 (NGDQ…FSPT). Polar residues-rich tracts occupy residues 343-359 (QPAT…SVKS) and 372-394 (GSPQ…ATSL). Over residues 395–411 (PSVASTPAAPNPASSPA) the composition is skewed to low complexity. Residues 414–426 (AVQSPQTPNQAHT) show a composition bias toward polar residues. Positions 467 to 480 (QLKQMAAQQQQRAK) are enriched in low complexity. Position 603 is an N6-acetyllysine (Lys603). Disordered stretches follow at residues 615-662 (RMTP…PRAH), 691-721 (HGQE…MVSG), 968-991 (LQGM…YPLQ), 1024-1084 (AAMG…SQAY), and 1090-1109 (QDVS…PGLP). Over residues 633-649 (QQQQQQQQQQQQQQQQQ) the composition is skewed to low complexity. The span at 1064 to 1084 (PPAQQQIPSGSFAPSSQSQAY) shows a compositional bias: polar residues.

It belongs to the mastermind family. In terms of assembly, interacts through its N-terminal region with the ankyrin repeat region of the Notch proteins NOTCH1, NOTCH2, NOTCH3 and NOTCH4. Forms a DNA-binding complex with Notch proteins and RBPSUH/RBP-J kappa.

It localises to the nucleus speckle. Functionally, acts as a transcriptional coactivator for NOTCH proteins. Has been shown to amplify NOTCH-induced transcription of HES1. This chain is Mastermind-like protein 3, found in Homo sapiens (Human).